The primary structure comprises 253 residues: Probable ATP-dependent transporter ycf16 (253 aa).

An ABC transporter domain is found at 6–250; it reads LEVTNLHAAV…EKYGYDWLKN (245 aa). 38–45 is a binding site for ATP; it reads GKNGSGKS.

Belongs to the ABC transporter superfamily. Ycf16 family.

The protein resides in the plastid. It localises to the chloroplast. In Guillardia theta (Cryptophyte), this protein is Probable ATP-dependent transporter ycf16 (ycf16).